The following is a 303-amino-acid chain: MYYGFDVGGTKIEFGAFNEKLERVATERIPTQTENYSLLVDDIASLIAKYDAEFGVEGKVGLGIPGMEDAETGALLTSNVPAAKGQFLRKDLEAKIGRSVKIDNDANCFALSEAWDEELKDSPSVMGLILGTGFGGGLIFDGKAFSGYSHVAGELGHSRLPIDAWFHLGENAPLLECGCGNKGCIDNYLSGRGFELLYAHYYGEQKKAIDIIKAHAEGDANAVEHVDRFMELLAICFANLFTCFDPHVVALGGGLSNFELIYEELPKRLPKHLLSVGRVPRIIKAKHGDSGGVRGAAFLNIKD.

ATP contacts are provided by residues 4 to 11 (GFDVGGTK) and 133 to 140 (GFGGGLIF). Zn(2+)-binding residues include histidine 157, cysteine 177, cysteine 179, and cysteine 184.

The protein belongs to the ROK (NagC/XylR) family. NagK subfamily.

It catalyses the reaction N-acetyl-D-glucosamine + ATP = N-acetyl-D-glucosamine 6-phosphate + ADP + H(+). It functions in the pathway cell wall biogenesis; peptidoglycan recycling. Catalyzes the phosphorylation of N-acetyl-D-glucosamine (GlcNAc) derived from cell-wall degradation, yielding GlcNAc-6-P. This is N-acetyl-D-glucosamine kinase from Aliivibrio fischeri (strain ATCC 700601 / ES114) (Vibrio fischeri).